Here is a 291-residue protein sequence, read N- to C-terminus: MSCQPFTSADTFIPLNSESSATLPLIMHHSAAECLPASNHATNVMSTATGLHYSVPSCHYGNQPSTYGVMAGSLTPCLYKFPDHTLSHGFPPMYQPLLPEDPTAADFKQELRRKSKLVEEPIDMDSPEIRELEKFPNEFKVRRIKLGYTQTNVGEALAAVHGSEFSQTTICRFENLQLSFKNACKLKAILSKWLEEAEQVGALYNEKVGANERKRKRRTTISIAAKDALERHFGEQNKPSSQEILRMAEELNLEKEVVRVWFCNRRQREKRVKTSLNQSLFTISKEHLECR.

Positions 5–13 (PFTSADTFI) match the 9aaTAD motif. Positions 124 to 198 (MDSPEIRELE…ILSKWLEEAE (75 aa)) constitute a POU-specific domain. A DNA-binding region (homeobox) is located at residues 214-273 (KRKRRTTISIAAKDALERHFGEQNKPSSQEILRMAEELNLEKEVVRVWFCNRRQREKRVK).

It belongs to the POU transcription factor family. Class-1 subfamily. In terms of assembly, interacts with PITX1. Interacts with LHX3. Interacts with ELK1.

It localises to the nucleus. Its function is as follows. Transcription factor involved in the specification of the lactotrope, somatotrope, and thyrotrope phenotypes in the developing anterior pituitary. Activates growth hormone and prolactin genes. Specifically binds to the consensus sequence 5'-TAAAT-3'. In Sus scrofa (Pig), this protein is Pituitary-specific positive transcription factor 1 (POU1F1).